Reading from the N-terminus, the 198-residue chain is Recombination protein RecR (198 aa).

A C4-type zinc finger spans residues 57–72; it reads CSICGNLTDQDPCAIC. The Toprim domain occupies 80–175; it reads STILIVEDSR…KVTRLARGLA (96 aa).

Belongs to the RecR family.

May play a role in DNA repair. It seems to be involved in an RecBC-independent recombinational process of DNA repair. It may act with RecF and RecO. The protein is Recombination protein RecR of Streptococcus suis (strain 05ZYH33).